A 365-amino-acid chain; its full sequence is Outer membrane porin protein LC (365 aa).

An N-terminal signal peptide occupies residues 1–23 (MKKLTVAISAVAASVLMAMSAQA).

This sequence belongs to the Gram-negative porin family. As to quaternary structure, homotrimer.

It localises to the host cell outer membrane. Its function is as follows. Forms pores that allow passive diffusion of small molecules across the host cell outer membrane. The sequence is that of Outer membrane porin protein LC (LC) from Enterobacteria phage PA-2 (Bacteriophage PA-2).